Reading from the N-terminus, the 366-residue chain is tRNA 2-selenouridine synthase (366 aa).

Residues 12–135 enclose the Rhodanese domain; it reads FLNDVPMMDA…MRTFLLDTLH (124 aa). Cys95 serves as the catalytic S-selanylcysteine intermediate.

This sequence belongs to the SelU family. In terms of assembly, monomer.

It carries out the reaction 5-methylaminomethyl-2-thiouridine(34) in tRNA + selenophosphate + (2E)-geranyl diphosphate + H2O + H(+) = 5-methylaminomethyl-2-selenouridine(34) in tRNA + (2E)-thiogeraniol + phosphate + diphosphate. It catalyses the reaction 5-methylaminomethyl-2-thiouridine(34) in tRNA + (2E)-geranyl diphosphate = 5-methylaminomethyl-S-(2E)-geranyl-thiouridine(34) in tRNA + diphosphate. The catalysed reaction is 5-methylaminomethyl-S-(2E)-geranyl-thiouridine(34) in tRNA + selenophosphate + H(+) = 5-methylaminomethyl-2-(Se-phospho)selenouridine(34) in tRNA + (2E)-thiogeraniol. The enzyme catalyses 5-methylaminomethyl-2-(Se-phospho)selenouridine(34) in tRNA + H2O = 5-methylaminomethyl-2-selenouridine(34) in tRNA + phosphate. In terms of biological role, involved in the post-transcriptional modification of the uridine at the wobble position (U34) of tRNA(Lys), tRNA(Glu) and tRNA(Gln). Catalyzes the conversion of 2-thiouridine (S2U-RNA) to 2-selenouridine (Se2U-RNA). Acts in a two-step process involving geranylation of 2-thiouridine (S2U) to S-geranyl-2-thiouridine (geS2U) and subsequent selenation of the latter derivative to 2-selenouridine (Se2U) in the tRNA chain. The chain is tRNA 2-selenouridine synthase from Pseudomonas syringae pv. syringae (strain B728a).